The primary structure comprises 542 residues: NXPE family member 4 (542 aa).

An N-terminal signal peptide occupies residues 1 to 26 (MKMMASRKSLWVLLFIVIFWISFTVF). N91, N92, N159, and N223 each carry an N-linked (GlcNAc...) asparagine glycan.

Belongs to the NXPE family.

Its subcellular location is the secreted. This chain is NXPE family member 4 (Nxpe4), found in Rattus norvegicus (Rat).